The following is a 325-amino-acid chain: Serine/threonine-protein kinase CtkA (325 aa).

Residues 21–24 (NGNK), Lys-37, Gln-72, and 88–90 (KDF) each bind ATP. Asn-160 and Asp-179 together coordinate Mg(2+). Residue Asp-179 participates in ATP binding. The interval 296–325 (QHKQAHSNPYDNADDLDNSNEYTPTPKRRR) is disordered.

In terms of processing, autophosphorylates on either Thr-3 or Thr-7.

It is found in the secreted. The protein localises to the host cytoplasm. The protein resides in the host cytosol. Its subcellular location is the host nucleus. It catalyses the reaction L-seryl-[protein] + ATP = O-phospho-L-seryl-[protein] + ADP + H(+). The catalysed reaction is L-threonyl-[protein] + ATP = O-phospho-L-threonyl-[protein] + ADP + H(+). In terms of biological role, virulence factor acting as a pro-inflammatory protein that induces the secretion of the pro-inflammatory cytokines TNF-alpha (tumor necrosis factor-alpha) and IL-8 (interleukin-8) from human macrophages, as well as enhanced translocation of the transcription factor NF-kappa-B complex in macrophages. Is a kinase capable of autophosphorylating itself at a threonine residue near the N-terminus. Also leads to enhanced phosphorylation of the NF-kappa-B p65 subunit (RELA) at 'Ser-276' in human epithelial cancer cells; its kinase activity is required for this enhanced phosphorylation that up-regulates NF-kappa-B activity, but it does not directly phosphorylate this protein. Thus, the kinase activity of CtkA may play an important role in the induction of host inflammatory responses during H.pylori infection. The chain is Serine/threonine-protein kinase CtkA (ctkA) from Helicobacter pylori (strain J99 / ATCC 700824) (Campylobacter pylori J99).